We begin with the raw amino-acid sequence, 277 residues long: tRNA pseudouridine synthase A (277 aa).

The Nucleophile role is filled by D51. Residue Y109 participates in substrate binding.

It belongs to the tRNA pseudouridine synthase TruA family. In terms of assembly, homodimer.

The enzyme catalyses uridine(38/39/40) in tRNA = pseudouridine(38/39/40) in tRNA. In terms of biological role, formation of pseudouridine at positions 38, 39 and 40 in the anticodon stem and loop of transfer RNAs. This chain is tRNA pseudouridine synthase A, found in Nitrosomonas eutropha (strain DSM 101675 / C91 / Nm57).